The chain runs to 28 residues: Dermaseptin-2 (28 aa).

Glutamine 28 bears the Glutamine amide mark.

This sequence belongs to the frog skin active peptide (FSAP) family. Dermaseptin subfamily. Expressed by the skin glands.

The protein localises to the secreted. In terms of biological role, antimicrobial peptide with activity against the Gram-positive bacterium S.aureus, and the Gram-negative bacteria E.coli and P.aeruginosa. Probably acts by disturbing membrane functions with its amphipathic structure. Has an activity of stimulation of insulin release, which may protect the species from being eaten by predators by causing fatal hypoglycemia. Has hemolytic activity (60% hemolysis at 128 ug/ml). The sequence is that of Dermaseptin-2 from Phyllomedusa tarsius (Brownbelly leaf frog).